Here is a 472-residue protein sequence, read N- to C-terminus: F-box protein At3g03040 (472 aa).

The F-box domain maps to 1-49; that stretch reads MDLLSSLPDEVRCLILSFLTTKESASTSVLSKKWRNLFALVPNLDFDDS.

The sequence is that of F-box protein At3g03040 from Arabidopsis thaliana (Mouse-ear cress).